Here is a 254-residue protein sequence, read N- to C-terminus: 5'/3'-nucleotidase SurE (254 aa).

The a divalent metal cation site is built by Asp9, Asp10, Ser40, and Asn93.

It belongs to the SurE nucleotidase family. A divalent metal cation is required as a cofactor.

It localises to the cytoplasm. The catalysed reaction is a ribonucleoside 5'-phosphate + H2O = a ribonucleoside + phosphate. The enzyme catalyses a ribonucleoside 3'-phosphate + H2O = a ribonucleoside + phosphate. It carries out the reaction [phosphate](n) + H2O = [phosphate](n-1) + phosphate + H(+). Its function is as follows. Nucleotidase with a broad substrate specificity as it can dephosphorylate various ribo- and deoxyribonucleoside 5'-monophosphates and ribonucleoside 3'-monophosphates with highest affinity to 3'-AMP. Also hydrolyzes polyphosphate (exopolyphosphatase activity) with the preference for short-chain-length substrates (P20-25). Might be involved in the regulation of dNTP and NTP pools, and in the turnover of 3'-mononucleotides produced by numerous intracellular RNases (T1, T2, and F) during the degradation of various RNAs. The polypeptide is 5'/3'-nucleotidase SurE (Yersinia pseudotuberculosis serotype O:1b (strain IP 31758)).